A 158-amino-acid polypeptide reads, in one-letter code: NAD(P)H-quinone oxidoreductase subunit J, chloroplastic (158 aa).

It belongs to the complex I 30 kDa subunit family. NDH is composed of at least 16 different subunits, 5 of which are encoded in the nucleus.

It localises to the plastid. It is found in the chloroplast thylakoid membrane. The enzyme catalyses a plastoquinone + NADH + (n+1) H(+)(in) = a plastoquinol + NAD(+) + n H(+)(out). It carries out the reaction a plastoquinone + NADPH + (n+1) H(+)(in) = a plastoquinol + NADP(+) + n H(+)(out). Functionally, NDH shuttles electrons from NAD(P)H:plastoquinone, via FMN and iron-sulfur (Fe-S) centers, to quinones in the photosynthetic chain and possibly in a chloroplast respiratory chain. The immediate electron acceptor for the enzyme in this species is believed to be plastoquinone. Couples the redox reaction to proton translocation, and thus conserves the redox energy in a proton gradient. In Acorus calamus var. americanus (American sweet flag), this protein is NAD(P)H-quinone oxidoreductase subunit J, chloroplastic.